We begin with the raw amino-acid sequence, 292 residues long: ATP-dependent Clp protease proteolytic subunit 4, chloroplastic (292 aa).

The N-terminal 65 residues, 1–65 (MGTLSLSSSL…LRFANASIEM (65 aa)), are a transit peptide targeting the chloroplast. At S66 the chain carries N-acetylserine. Residue S158 is the Nucleophile of the active site. Residue H183 is part of the active site.

This sequence belongs to the peptidase S14 family. In terms of assembly, component of the chloroplastic Clp protease core complex which consist of at least 16 proteins: CLPP4 (3 copies), CLPP5 (3 copies), CLPR4 (2 copies), ClpP1 (1 copy), CLPP6 (1 copy), CLPR2 (1 copy), CLPT1 (1 copy), CLPT2 (1 copy) and 3 copies of CLPP3 and/or CLPR1 and/or CLPR3. Interacts with CHIP. The core complex is organized in two heptameric rings, one containing CLPP3,4,5,6 in a 1:2:3:1 ratio and the other CLPP1 and CLPR1,2,3,4 in a 3:1:1:1:1 ratio. Ubiquitinated by CHIP. In terms of tissue distribution, mostly expressed in leaves. Also detected in stems, and to a lower extent, in roots (at protein level).

The protein resides in the plastid. It localises to the chloroplast stroma. It catalyses the reaction Hydrolysis of proteins to small peptides in the presence of ATP and magnesium. alpha-casein is the usual test substrate. In the absence of ATP, only oligopeptides shorter than five residues are hydrolyzed (such as succinyl-Leu-Tyr-|-NHMec, and Leu-Tyr-Leu-|-Tyr-Trp, in which cleavage of the -Tyr-|-Leu- and -Tyr-|-Trp bonds also occurs).. Functionally, cleaves peptides in various proteins in a process that requires ATP hydrolysis. Has a chymotrypsin-like activity. Plays a major role in the degradation of misfolded proteins. Essential protein required for chloroplast development and integrity. Essential for Embryogenesis. In Arabidopsis thaliana (Mouse-ear cress), this protein is ATP-dependent Clp protease proteolytic subunit 4, chloroplastic.